Reading from the N-terminus, the 92-residue chain is MTRLLKKGPFVAYHLLEKIEDLNIKREKKIIVTWSRASTIVPTMIGHTIAVYNGQEHLPIYITDRMVGHKLGEFALTRVFKGHAKSDKKSRR.

It belongs to the universal ribosomal protein uS19 family.

Its subcellular location is the plastid. The protein localises to the chloroplast. In terms of biological role, protein S19 forms a complex with S13 that binds strongly to the 16S ribosomal RNA. This chain is Small ribosomal subunit protein uS19c (rps19), found in Anthoceros angustus (Hornwort).